A 252-amino-acid polypeptide reads, in one-letter code: Uridylate kinase (252 aa).

23-26 serves as a coordination point for ATP; it reads KLSG. G65 serves as a coordination point for UMP. Residues G66 and R70 each contribute to the ATP site. UMP contacts are provided by residues D85 and 146 to 153; that span reads LGAPFFST. The ATP site is built by T173, Q174, Y179, and D182.

It belongs to the UMP kinase family. In terms of assembly, homohexamer.

Its subcellular location is the cytoplasm. It carries out the reaction UMP + ATP = UDP + ADP. The protein operates within pyrimidine metabolism; CTP biosynthesis via de novo pathway; UDP from UMP (UMPK route): step 1/1. Inhibited by UTP. In terms of biological role, catalyzes the reversible phosphorylation of UMP to UDP. In Thermobifida fusca (strain YX), this protein is Uridylate kinase.